Consider the following 499-residue polypeptide: Probable dipeptidase B (499 aa).

C26 is an active-site residue.

It belongs to the peptidase C69 family.

It carries out the reaction an L-aminoacyl-L-amino acid + H2O = 2 an L-alpha-amino acid. The chain is Probable dipeptidase B (pepDB) from Streptococcus pyogenes serotype M3 (strain ATCC BAA-595 / MGAS315).